The primary structure comprises 313 residues: Porphobilinogen deaminase (313 aa).

Cysteine 242 bears the S-(dipyrrolylmethanemethyl)cysteine mark.

Belongs to the HMBS family. In terms of assembly, monomer. Dipyrromethane is required as a cofactor.

The catalysed reaction is 4 porphobilinogen + H2O = hydroxymethylbilane + 4 NH4(+). Its pathway is porphyrin-containing compound metabolism; protoporphyrin-IX biosynthesis; coproporphyrinogen-III from 5-aminolevulinate: step 2/4. Tetrapolymerization of the monopyrrole PBG into the hydroxymethylbilane pre-uroporphyrinogen in several discrete steps. In Pseudomonas syringae pv. tomato (strain ATCC BAA-871 / DC3000), this protein is Porphobilinogen deaminase.